Consider the following 209-residue polypeptide: Uracil phosphoribosyltransferase (209 aa).

5-phospho-alpha-D-ribose 1-diphosphate contacts are provided by residues Arg-79, Arg-104, and 131–139 (DPLLATGNS). Uracil-binding positions include Ile-194 and 199 to 201 (GDA). Residue Asp-200 participates in 5-phospho-alpha-D-ribose 1-diphosphate binding.

It belongs to the UPRTase family. Mg(2+) is required as a cofactor.

It carries out the reaction UMP + diphosphate = 5-phospho-alpha-D-ribose 1-diphosphate + uracil. The protein operates within pyrimidine metabolism; UMP biosynthesis via salvage pathway; UMP from uracil: step 1/1. Its activity is regulated as follows. Allosterically activated by GTP. Its function is as follows. Catalyzes the conversion of uracil and 5-phospho-alpha-D-ribose 1-diphosphate (PRPP) to UMP and diphosphate. This is Uracil phosphoribosyltransferase from Rhodococcus opacus (strain B4).